Consider the following 261-residue polypeptide: Putative [LysW]-aminoadipate/[LysW]-glutamate kinase (261 aa).

Substrate contacts are provided by residues 35-36 (GG), R62, and N162.

The protein belongs to the acetylglutamate kinase family. LysZ subfamily.

The protein resides in the cytoplasm. The enzyme catalyses [amino-group carrier protein]-C-terminal-N-(1,4-dicarboxybutan-1-yl)-L-glutamine + ATP = [amino-group carrier protein]-C-terminal-N-(1-carboxy-5-phosphooxy-5-oxopentan-1-yl)-L-glutamine + ADP. It catalyses the reaction [amino-group carrier protein]-C-terminal-gamma-(L-glutamyl)-L-glutamate + ATP = [amino-group carrier protein]-C-terminal-gamma-(5-phospho-L-glutamyl)-L-glutamate + ADP. It participates in amino-acid biosynthesis; L-lysine biosynthesis via AAA pathway; L-lysine from L-alpha-aminoadipate (Thermus route): step 2/5. Its pathway is amino-acid biosynthesis; L-arginine biosynthesis. In terms of biological role, involved in both the arginine and lysine biosynthetic pathways. Phosphorylates the LysW-bound precursors glutamate (for arginine biosynthesis), respectively alpha-aminoadipate (for lysine biosynthesis). The protein is Putative [LysW]-aminoadipate/[LysW]-glutamate kinase of Pyrobaculum islandicum (strain DSM 4184 / JCM 9189 / GEO3).